We begin with the raw amino-acid sequence, 671 residues long: Probable potassium transport system protein Kup 2 (671 aa).

A run of 12 helical transmembrane segments spans residues 18 to 38 (GFLI…LYAM), 60 to 80 (VSLV…LIAL), 103 to 123 (WLII…ALTP), 146 to 166 (AVMV…RFGA), 173 to 193 (FGPI…INSF), 218 to 238 (AGFF…ALYS), 252 to 272 (WPFV…WLLA), 292 to 312 (MVIY…QALI), 343 to 363 (LYIP…VLYF), 373 to 393 (YSLA…YFLI), 402 to 422 (IAII…ASLV), and 424 to 444 (FING…VMFI).

It belongs to the HAK/KUP transporter (TC 2.A.72) family.

The protein resides in the cell membrane. The enzyme catalyses K(+)(in) + H(+)(in) = K(+)(out) + H(+)(out). Transport of potassium into the cell. Likely operates as a K(+):H(+) symporter. The polypeptide is Probable potassium transport system protein Kup 2 (Lactococcus lactis subsp. lactis (strain IL1403) (Streptococcus lactis)).